A 374-amino-acid polypeptide reads, in one-letter code: Lipoyl synthase, mitochondrial (374 aa).

Positions 101, 106, 112, 132, 136, 139, and 347 each coordinate [4Fe-4S] cluster. In terms of domain architecture, Radical SAM core spans 117–336 (ENGTQTATIM…EERGNDLGFL (220 aa)).

The protein belongs to the radical SAM superfamily. Lipoyl synthase family. [4Fe-4S] cluster serves as cofactor.

Its subcellular location is the mitochondrion. It carries out the reaction [[Fe-S] cluster scaffold protein carrying a second [4Fe-4S](2+) cluster] + N(6)-octanoyl-L-lysyl-[protein] + 2 oxidized [2Fe-2S]-[ferredoxin] + 2 S-adenosyl-L-methionine + 4 H(+) = [[Fe-S] cluster scaffold protein] + N(6)-[(R)-dihydrolipoyl]-L-lysyl-[protein] + 4 Fe(3+) + 2 hydrogen sulfide + 2 5'-deoxyadenosine + 2 L-methionine + 2 reduced [2Fe-2S]-[ferredoxin]. It participates in protein modification; protein lipoylation via endogenous pathway; protein N(6)-(lipoyl)lysine from octanoyl-[acyl-carrier-protein]: step 2/2. In terms of biological role, catalyzes the radical-mediated insertion of two sulfur atoms into the C-6 and C-8 positions of the octanoyl moiety bound to the lipoyl domains of lipoate-dependent enzymes, thereby converting the octanoylated domains into lipoylated derivatives. The chain is Lipoyl synthase, mitochondrial from Drosophila pseudoobscura pseudoobscura (Fruit fly).